Here is a 466-residue protein sequence, read N- to C-terminus: 23S rRNA (uracil(1939)-C(5))-methyltransferase RlmD (466 aa).

The disordered stretch occupies residues 1-22 (MSSQPNPTSHPEAASAASAASN). The region spanning 17 to 81 (ASAASNDPVV…PSYEQAHLVE (65 aa)) is the TRAM domain. Cysteine 94, cysteine 100, cysteine 103, and cysteine 182 together coordinate [4Fe-4S] cluster. 6 residues coordinate S-adenosyl-L-methionine: glutamine 290, phenylalanine 319, asparagine 324, glutamate 340, asparagine 368, and aspartate 389. Cysteine 422 functions as the Nucleophile in the catalytic mechanism.

The protein belongs to the class I-like SAM-binding methyltransferase superfamily. RNA M5U methyltransferase family. RlmD subfamily.

It carries out the reaction uridine(1939) in 23S rRNA + S-adenosyl-L-methionine = 5-methyluridine(1939) in 23S rRNA + S-adenosyl-L-homocysteine + H(+). Its function is as follows. Catalyzes the formation of 5-methyl-uridine at position 1939 (m5U1939) in 23S rRNA. In Cupriavidus metallidurans (strain ATCC 43123 / DSM 2839 / NBRC 102507 / CH34) (Ralstonia metallidurans), this protein is 23S rRNA (uracil(1939)-C(5))-methyltransferase RlmD.